Here is a 310-residue protein sequence, read N- to C-terminus: Methionyl-tRNA formyltransferase (310 aa).

A (6S)-5,6,7,8-tetrahydrofolate-binding site is contributed by 111 to 114 (SILP).

Belongs to the Fmt family.

It carries out the reaction L-methionyl-tRNA(fMet) + (6R)-10-formyltetrahydrofolate = N-formyl-L-methionyl-tRNA(fMet) + (6S)-5,6,7,8-tetrahydrofolate + H(+). Its function is as follows. Attaches a formyl group to the free amino group of methionyl-tRNA(fMet). The formyl group appears to play a dual role in the initiator identity of N-formylmethionyl-tRNA by promoting its recognition by IF2 and preventing the misappropriation of this tRNA by the elongation apparatus. The polypeptide is Methionyl-tRNA formyltransferase (Methylobacterium sp. (strain 4-46)).